The following is a 157-amino-acid chain: 2-C-methyl-D-erythritol 2,4-cyclodiphosphate synthase (157 aa).

A divalent metal cation contacts are provided by aspartate 9 and histidine 11. Residues 9 to 11 (DVH) and 35 to 36 (HS) each bind 4-CDP-2-C-methyl-D-erythritol 2-phosphate. Histidine 43 is an a divalent metal cation binding site. 4-CDP-2-C-methyl-D-erythritol 2-phosphate-binding positions include 57 to 59 (DIG), 62 to 66 (FPDTD), 101 to 107 (AQKPKMA), 133 to 136 (TTTE), phenylalanine 140, and arginine 143.

The protein belongs to the IspF family. Homotrimer. The cofactor is a divalent metal cation.

It catalyses the reaction 4-CDP-2-C-methyl-D-erythritol 2-phosphate = 2-C-methyl-D-erythritol 2,4-cyclic diphosphate + CMP. Its pathway is isoprenoid biosynthesis; isopentenyl diphosphate biosynthesis via DXP pathway; isopentenyl diphosphate from 1-deoxy-D-xylulose 5-phosphate: step 4/6. In terms of biological role, involved in the biosynthesis of isopentenyl diphosphate (IPP) and dimethylallyl diphosphate (DMAPP), two major building blocks of isoprenoid compounds. Catalyzes the conversion of 4-diphosphocytidyl-2-C-methyl-D-erythritol 2-phosphate (CDP-ME2P) to 2-C-methyl-D-erythritol 2,4-cyclodiphosphate (ME-CPP) with a corresponding release of cytidine 5-monophosphate (CMP). This Halalkalibacterium halodurans (strain ATCC BAA-125 / DSM 18197 / FERM 7344 / JCM 9153 / C-125) (Bacillus halodurans) protein is 2-C-methyl-D-erythritol 2,4-cyclodiphosphate synthase.